A 447-amino-acid polypeptide reads, in one-letter code: MSTMTPAEIVSELDKHIIGQAKAKKAVAVALRNRWRRQQVAEPLRQEITPKNILMIGPTGVGKTEIARRLAKLADAPFIKIEATKFTEVGYVGRDVDSIVRDLIEISVKQTREAEMRKVRSKATDQAEDRILDILLPQPRAVGFGGNAEHANDDNNATRQTFRKRLREGQLDDKEVELDLEQPSVGMDIMAPPGMEEMTEQIRSMFSNLGSGKKQRRKVKIKEALKLLTDEEAAKMLNEEEVKTKAVQNVEQNGIVFLDEIDKITSRNNEGSGGEVSRQGVQRDLLPLVEGTTVNTKYGMVKTDHILFIASGAFHLAKPSDLIPELQGRFPIRVELDSLSVEDFEAILDATDASLVKQYQALLATEDVQLEFAADGIRRLAEIAFAVNEKTENIGARRLYTVIEKLLEEVSFSAGNHAGERVTIDAKYVDRALGEVAQDEDLSRYVL.

ATP is bound by residues Ile-18, 60–65 (GVGKTE), Asp-259, Glu-325, and Arg-397.

Belongs to the ClpX chaperone family. HslU subfamily. A double ring-shaped homohexamer of HslV is capped on each side by a ring-shaped HslU homohexamer. The assembly of the HslU/HslV complex is dependent on binding of ATP.

Its subcellular location is the cytoplasm. In terms of biological role, ATPase subunit of a proteasome-like degradation complex; this subunit has chaperone activity. The binding of ATP and its subsequent hydrolysis by HslU are essential for unfolding of protein substrates subsequently hydrolyzed by HslV. HslU recognizes the N-terminal part of its protein substrates and unfolds these before they are guided to HslV for hydrolysis. The chain is ATP-dependent protease ATPase subunit HslU from Burkholderia cenocepacia (strain HI2424).